Here is a 152-residue protein sequence, read N- to C-terminus: Transcriptional regulator MraZ (152 aa).

SpoVT-AbrB domains are found at residues 5–52 (ASAI…PIHE) and 81–124 (AHEV…DEQA).

This sequence belongs to the MraZ family. Forms oligomers.

The protein localises to the cytoplasm. The protein resides in the nucleoid. The polypeptide is Transcriptional regulator MraZ (Shewanella sp. (strain ANA-3)).